Consider the following 378-residue polypeptide: AA13 family lytic polysaccharide monooxygenase A (378 aa).

The first 17 residues, 1–17, serve as a signal peptide directing secretion; that stretch reads MKWSVIQALALASGVQA. H18 contacts Cu(2+). The residue at position 18 (H18) is a Methylhistidine. A Chitin-binding type-4 domain is found at 18–244; sequence HGYLTFPMSR…PQIYLTCADI (227 aa). 7 cysteine pairs are disulfide-bonded: C39–C42, C65–C241, C101–C199, C117–C144, C152–C160, C166–C172, and C180–C188. Residue H108 participates in Cu(2+) binding. N-linked (GlcNAc...) asparagine glycosylation is present at N221. Cu(2+) is bound at residue Y238. Residues 250–263 show a composition bias toward low complexity; the sequence is DSQSPPTTTTTSTP. Residues 250-272 are disordered; that stretch reads DSQSPPTTTTTSTPASPPPTSCA. One can recognise a CBM20 domain in the interval 272 to 378; that stretch reads ATPAASVAVT…GTATVDTAWK (107 aa).

This sequence belongs to the polysaccharide monooxygenase AA13 family. The cofactor is Cu(2+). O-mannosylated.

The protein localises to the secreted. It carries out the reaction starch + reduced acceptor + O2 = D-glucono-1,5-lactone-terminated malto-oligosaccharides + short-chain malto-oligosaccharides + acceptor + H2O.. With respect to regulation, activity is inhibited by both beta-cyclodextrin or amylose that block the access to the active site. In terms of biological role, starch-active lytic polysaccharide monooxygenase that oxidizes the C1 position of starch substrates. Catalysis by LPMOs requires the reduction of the active-site copper from Cu(II) to Cu(I) by a reducing agent and H(2)O(2) or O(2) as a cosubstrate. The protein is AA13 family lytic polysaccharide monooxygenase A of Pyricularia oryzae (strain 70-15 / ATCC MYA-4617 / FGSC 8958) (Rice blast fungus).